The chain runs to 491 residues: Cytochrome P450 2B9 (491 aa).

The residue at position 128 (Ser128) is a Phosphoserine; by PKA. Cys436 contributes to the heme binding site.

The protein belongs to the cytochrome P450 family. It depends on heme as a cofactor.

The protein resides in the endoplasmic reticulum membrane. Its subcellular location is the microsome membrane. It carries out the reaction an organic molecule + reduced [NADPH--hemoprotein reductase] + O2 = an alcohol + oxidized [NADPH--hemoprotein reductase] + H2O + H(+). Cytochromes P450 are a group of heme-thiolate monooxygenases. In liver microsomes, this enzyme is involved in an NADPH-dependent electron transport pathway. It oxidizes a variety of structurally unrelated compounds, including steroids, fatty acids, and xenobiotics. In Mus musculus (Mouse), this protein is Cytochrome P450 2B9 (Cyp2b9).